The following is a 430-amino-acid chain: Long-chain specific acyl-CoA dehydrogenase, mitochondrial (430 aa).

Residues 1-30 (MAARLLRGSLRVLGGHRAPRQLPAARCSHS) constitute a mitochondrion transit peptide. Lysine 42 is subject to N6-acetyllysine. Serine 54 is subject to Phosphoserine. An N6-acetyllysine; alternate mark is found at lysine 66 and lysine 81. N6-succinyllysine; alternate is present on residues lysine 66 and lysine 81. N6-acetyllysine is present on residues lysine 92 and lysine 95. Lysine 165 carries the post-translational modification N6-succinyllysine. Residues 170 to 179 (IAMTEPGAGS) and 203 to 205 (FIS) contribute to the FAD site. Serine 179 is a substrate binding site. 227 to 228 (AH) contacts substrate. Lysine 240 is subject to N6-succinyllysine. N6-acetyllysine; alternate is present on residues lysine 254 and lysine 279. 2 positions are modified to N6-succinyllysine; alternate: lysine 254 and lysine 279. Substrate contacts are provided by residues tyrosine 282 and 289–292 (PQER). The Proton acceptor role is filled by glutamate 291. Arginine 317 contributes to the FAD binding site. Lysine 318 carries the post-translational modification N6-acetyllysine. The residue at position 322 (lysine 322) is an N6-acetyllysine; alternate. Position 322 is an N6-succinyllysine; alternate (lysine 322). Glutamine 328 contributes to the FAD binding site. Lysine 358 carries the post-translational modification N6-acetyllysine. Phosphoserine is present on serine 362. 385 to 389 (QLHGG) is an FAD binding site. A substrate-binding site is contributed by 412 to 413 (GG). 414–416 (TNE) is a binding site for FAD.

This sequence belongs to the acyl-CoA dehydrogenase family. As to quaternary structure, homotetramer. It depends on FAD as a cofactor. In terms of processing, acetylation at Lys-318 and Lys-322 in proximity of the cofactor-binding sites strongly reduces catalytic activity. These sites are deacetylated by SIRT3.

It localises to the mitochondrion matrix. The enzyme catalyses a long-chain 2,3-saturated fatty acyl-CoA + oxidized [electron-transfer flavoprotein] + H(+) = a long-chain (2E)-enoyl-CoA + reduced [electron-transfer flavoprotein]. The catalysed reaction is hexanoyl-CoA + oxidized [electron-transfer flavoprotein] + H(+) = (2E)-hexenoyl-CoA + reduced [electron-transfer flavoprotein]. It catalyses the reaction octanoyl-CoA + oxidized [electron-transfer flavoprotein] + H(+) = (2E)-octenoyl-CoA + reduced [electron-transfer flavoprotein]. It carries out the reaction decanoyl-CoA + oxidized [electron-transfer flavoprotein] + H(+) = (2E)-decenoyl-CoA + reduced [electron-transfer flavoprotein]. The enzyme catalyses dodecanoyl-CoA + oxidized [electron-transfer flavoprotein] + H(+) = (2E)-dodecenoyl-CoA + reduced [electron-transfer flavoprotein]. The catalysed reaction is tetradecanoyl-CoA + oxidized [electron-transfer flavoprotein] + H(+) = (2E)-tetradecenoyl-CoA + reduced [electron-transfer flavoprotein]. It catalyses the reaction oxidized [electron-transfer flavoprotein] + hexadecanoyl-CoA + H(+) = (2E)-hexadecenoyl-CoA + reduced [electron-transfer flavoprotein]. It carries out the reaction octadecanoyl-CoA + oxidized [electron-transfer flavoprotein] + H(+) = (2E)-octadecenoyl-CoA + reduced [electron-transfer flavoprotein]. The enzyme catalyses eicosanoyl-CoA + oxidized [electron-transfer flavoprotein] + H(+) = (2E)-eicosenoyl-CoA + reduced [electron-transfer flavoprotein]. The catalysed reaction is docosanoyl-CoA + oxidized [electron-transfer flavoprotein] + H(+) = (2E)-docosenoyl-CoA + reduced [electron-transfer flavoprotein]. It catalyses the reaction tetracosanoyl-CoA + oxidized [electron-transfer flavoprotein] + H(+) = (2E)-tetracosenoyl-CoA + reduced [electron-transfer flavoprotein]. It carries out the reaction (5E)-tetradecenoyl-CoA + oxidized [electron-transfer flavoprotein] + H(+) = (2E,5E)-tetradecadienoyl-CoA + reduced [electron-transfer flavoprotein]. The enzyme catalyses (5Z)-tetradecenoyl-CoA + oxidized [electron-transfer flavoprotein] + H(+) = (2E,5Z)-tetradecadienoyl-CoA + reduced [electron-transfer flavoprotein]. The catalysed reaction is oxidized [electron-transfer flavoprotein] + (9Z)-octadecenoyl-CoA + H(+) = (2E,9Z)-octadecadienoyl-CoA + reduced [electron-transfer flavoprotein]. It functions in the pathway lipid metabolism; mitochondrial fatty acid beta-oxidation. In terms of biological role, long-chain specific acyl-CoA dehydrogenase is one of the acyl-CoA dehydrogenases that catalyze the first step of mitochondrial fatty acid beta-oxidation, an aerobic process breaking down fatty acids into acetyl-CoA and allowing the production of energy from fats. The first step of fatty acid beta-oxidation consists in the removal of one hydrogen from C-2 and C-3 of the straight-chain fatty acyl-CoA thioester, resulting in the formation of trans-2-enoyl-CoA. Among the different mitochondrial acyl-CoA dehydrogenases, long-chain specific acyl-CoA dehydrogenase can act on saturated and unsaturated acyl-CoAs with 6 to 24 carbons with a preference for 8 to 18 carbons long primary chains. In Homo sapiens (Human), this protein is Long-chain specific acyl-CoA dehydrogenase, mitochondrial.